The chain runs to 94 residues: Integration host factor subunit beta (94 aa).

This sequence belongs to the bacterial histone-like protein family. In terms of assembly, heterodimer of an alpha and a beta chain.

This protein is one of the two subunits of integration host factor, a specific DNA-binding protein that functions in genetic recombination as well as in transcriptional and translational control. The protein is Integration host factor subunit beta of Brucella melitensis biotype 2 (strain ATCC 23457).